The sequence spans 153 residues: Probable trafficking protein particle complex subunit 2 (153 aa).

This sequence belongs to the TRAPP small subunits family. Sedlin subfamily. Part of the multisubunit TRAPP (transport protein particle) complex.

The protein localises to the cytoplasm. The protein resides in the perinuclear region. It localises to the endoplasmic reticulum. It is found in the golgi apparatus. Its function is as follows. May play a role in vesicular transport from endoplasmic reticulum to Golgi. The polypeptide is Probable trafficking protein particle complex subunit 2 (Nematostella vectensis (Starlet sea anemone)).